A 488-amino-acid chain; its full sequence is Palmitoyltransferase ZDHHC14 (488 aa).

At 1–60 (MPPGGGGPMKDCEYSQISTHSSSPMESPHKKKKIAARRKWEVFPGRNKFFCNGRIMMARQ) the chain is on the cytoplasmic side. A helical membrane pass occupies residues 61 to 81 (TGVFYLTLVLILVTSGLFFAF). Residues 82 to 89 (DCPYLAVK) lie on the Lumenal side of the membrane. The chain crosses the membrane as a helical span at residues 90 to 110 (ITPAIPAVAGILFFFVMGTLL). Residues 111-208 (RTSFSDPGVL…GNCVGKRNYR (98 aa)) are Cytoplasmic-facing. In terms of domain architecture, DHHC spans 165–215 (KYCFTCKIFRPPRASHCSLCDNCVERFDHHCPWVGNCVGKRNYRFFYMFIL). The active-site S-palmitoyl cysteine intermediate is Cys195. A helical membrane pass occupies residues 209–229 (FFYMFILSLSFLTVFIFAFVI). Residues 230–255 (THVILRSQQTGFLNALKDSPASVLEA) lie on the Lumenal side of the membrane. Residues 256-276 (VVCFFSVWSIVGLSGFHTYLI) traverse the membrane as a helical segment. The Cytoplasmic portion of the chain corresponds to 277-488 (SSNQTTNEDI…VRGLVKLSSV (212 aa)). The residue at position 455 (Ser455) is a Phosphoserine.

This sequence belongs to the DHHC palmitoyltransferase family. ERF2/ZDHHC9 subfamily. Widely expressed.

It is found in the endoplasmic reticulum membrane. It localises to the golgi apparatus. The protein localises to the golgi stack membrane. The catalysed reaction is L-cysteinyl-[protein] + hexadecanoyl-CoA = S-hexadecanoyl-L-cysteinyl-[protein] + CoA. Its function is as follows. Palmitoyltransferase that could catalyze the addition of palmitate onto various protein substrates. May have a palmitoyltransferase activity toward the beta-2 adrenergic receptor/ADRB2 and thereby regulate G protein-coupled receptor signaling. May play a role in cell differentiation and apoptosis. The polypeptide is Palmitoyltransferase ZDHHC14 (Homo sapiens (Human)).